The following is a 294-amino-acid chain: Cytidine deaminase (294 aa).

CMP/dCMP-type deaminase domains lie at 48-168 (DEDA…FGPK) and 186-294 (VSGD…VLLG). Position 89–91 (89–91 (NME)) interacts with substrate. His-102 lines the Zn(2+) pocket. Glu-104 (proton donor) is an active-site residue. Zn(2+)-binding residues include Cys-129 and Cys-132.

The protein belongs to the cytidine and deoxycytidylate deaminase family. In terms of assembly, homodimer. Zn(2+) is required as a cofactor.

It carries out the reaction cytidine + H2O + H(+) = uridine + NH4(+). The enzyme catalyses 2'-deoxycytidine + H2O + H(+) = 2'-deoxyuridine + NH4(+). Its function is as follows. This enzyme scavenges exogenous and endogenous cytidine and 2'-deoxycytidine for UMP synthesis. This chain is Cytidine deaminase, found in Klebsiella pneumoniae (strain 342).